Reading from the N-terminus, the 331-residue chain is UPF0324 membrane protein SAS0317 (331 aa).

The next 11 membrane-spanning stretches (helical) occupy residues 9 to 26 (FMIGLTLTFIVALFSFLA), 31 to 48 (ILDKVGALTIAILIAILY), 69 to 88 (LLRFAIILYGLKLNIFDIIG), 93 to 115 (LLAIDVGVVIFSIVMMLFVNKLL), 122 to 144 (ALLLGVGTGVCGAAAIAAVAPIF), 154 to 176 (SIGIIALIGTIFSLIYTAIYAIF), 183 to 202 (YGAWSGVSLHEIAHVVLAGG), 217 to 234 (LGRVFLLIPLTIVLILIM), 247 to 269 (ISIPYFLIGFVIMALVNTYVTIP), 273 to 295 (LNILNTVSTICLLMAMVALGLNV), and 308 to 330 (LMTIIITSICLSSLAFIVVHWLY).

The protein belongs to the UPF0324 family.

The protein resides in the cell membrane. The sequence is that of UPF0324 membrane protein SAS0317 from Staphylococcus aureus (strain MSSA476).